The chain runs to 554 residues: Endochitinase (554 aa).

The first 19 residues, 1–19 (MRATLATLAVLALATAVQS), serve as a signal peptide directing secretion. Residues 23-398 (ARIVCYFSNW…KILHKHMSSY (376 aa)) form the GH18 domain. Cysteine 27 and cysteine 52 are oxidised to a cystine. 76–77 (LD) contacts chitin. An N-linked (GlcNAc...) asparagine glycan is attached at asparagine 85. Residue 103 to 106 (GGWA) participates in chitin binding. The active-site Proton donor is the glutamate 146. Residues tyrosine 147 and 213–216 (MSYD) contribute to the chitin site. Residue asparagine 303 is glycosylated (N-linked (GlcNAc...) asparagine). Tryptophan 370 contacts chitin. Positions 398–494 (YTVPPPHTEN…VPPTENEVDG (97 aa)) are disordered. The segment covering 431-457 (PTTTTAKPASTTKTTVKTTTTTTAKPP) has biased composition (low complexity). Over residues 467–477 (INVRPEPKPEP) the composition is skewed to basic and acidic residues. A Chitin-binding type-2 domain is found at 495-553 (SEICNSDQDYIPDKKHCDKYWRCVNGEAMQFSCQHGTVFNVELNVCDWPSNATRRECQQ). Cysteines 527 and 540 form a disulfide. Asparagine 545 carries N-linked (GlcNAc...) asparagine glycosylation.

This sequence belongs to the glycosyl hydrolase 18 family. Chitinase class II subfamily. As to expression, epidermis and gut.

The protein localises to the secreted. The catalysed reaction is Random endo-hydrolysis of N-acetyl-beta-D-glucosaminide (1-&gt;4)-beta-linkages in chitin and chitodextrins.. Its function is as follows. Digests chitin in the exoskeleton during the molting process. The protein is Endochitinase of Manduca sexta (Tobacco hawkmoth).